A 502-amino-acid chain; its full sequence is 4,4'-diapophytoene desaturase (4,4'-diaponeurosporene-forming) (502 aa).

Position 5–17 (5–17 (VIGAGVTGLAAAA)) interacts with FAD.

It belongs to the carotenoid/retinoid oxidoreductase family. CrtN subfamily.

The catalysed reaction is 15-cis-4,4'-diapophytoene + 3 FAD + 3 H(+) = all-trans-4,4'-diaponeurosporene + 3 FADH2. It functions in the pathway carotenoid biosynthesis; staphyloxanthin biosynthesis; staphyloxanthin from farnesyl diphosphate: step 2/5. Its function is as follows. Involved in the biosynthesis of the yellow-orange carotenoid staphyloxanthin, which plays a role in the virulence via its protective function against oxidative stress. Catalyzes three successive dehydrogenation reactions that lead to the introduction of three double bonds into 4,4'-diapophytoene (dehydrosqualene), with 4,4'-diapophytofluene and 4,4'-diapo-zeta-carotene as intermediates, and 4,4'-diaponeurosporene (the major deep-yellow pigment in staphylococci strains) as the end product. In Staphylococcus aureus (strain bovine RF122 / ET3-1), this protein is 4,4'-diapophytoene desaturase (4,4'-diaponeurosporene-forming).